Consider the following 63-residue polypeptide: Large ribosomal subunit protein bL28 (63 aa).

It belongs to the bacterial ribosomal protein bL28 family.

This is Large ribosomal subunit protein bL28 from Desulfosudis oleivorans (strain DSM 6200 / JCM 39069 / Hxd3) (Desulfococcus oleovorans).